The primary structure comprises 343 residues: Fructose-1,6-bisphosphatase class 1 (343 aa).

Positions 90, 109, 111, and 112 each coordinate Mg(2+). Substrate is bound by residues 112–115 (DGSS) and Asn199. Mg(2+) is bound at residue Glu271.

This sequence belongs to the FBPase class 1 family. In terms of assembly, homotetramer. Mg(2+) serves as cofactor.

Its subcellular location is the cytoplasm. The catalysed reaction is beta-D-fructose 1,6-bisphosphate + H2O = beta-D-fructose 6-phosphate + phosphate. Its pathway is carbohydrate biosynthesis; Calvin cycle. This is Fructose-1,6-bisphosphatase class 1 from Rhodopseudomonas palustris (strain HaA2).